We begin with the raw amino-acid sequence, 323 residues long: DNA repair and recombination protein RadA (323 aa).

Position 114-121 (114-121 (GEFGSGKT)) interacts with ATP.

It belongs to the eukaryotic RecA-like protein family.

In terms of biological role, involved in DNA repair and in homologous recombination. Binds and assemble on single-stranded DNA to form a nucleoprotein filament. Hydrolyzes ATP in a ssDNA-dependent manner and promotes DNA strand exchange between homologous DNA molecules. This Picrophilus torridus (strain ATCC 700027 / DSM 9790 / JCM 10055 / NBRC 100828 / KAW 2/3) protein is DNA repair and recombination protein RadA.